A 320-amino-acid polypeptide reads, in one-letter code: Malate dehydrogenase (320 aa).

NAD(+) contacts are provided by residues 10 to 15 and D34; that span reads GSGMIG. 2 residues coordinate substrate: R83 and R89. Residues N96 and 119–121 contribute to the NAD(+) site; that span reads ITN. The substrate site is built by N121 and R152. The active-site Proton acceptor is the H176.

Belongs to the LDH/MDH superfamily. MDH type 3 family.

It catalyses the reaction (S)-malate + NAD(+) = oxaloacetate + NADH + H(+). In terms of biological role, catalyzes the reversible oxidation of malate to oxaloacetate. This is Malate dehydrogenase from Brucella suis (strain ATCC 23445 / NCTC 10510).